Consider the following 644-residue polypeptide: MVAITLPDGNVKEFDGATTVMEVAQSIGPGLAKATIAGRVDGKLVDASDPITQDASVEIVTAKDKDGVDIIRHSTAHLLGHAVKQLYPNVKMVIGPVIEDGFYYDIFSEKPFTPEDMAAIEKRMAELIKQNYDVIKKMTPREEAIKIFEERGEDYKLKLIADMPEEKELGLYHHQEYVDMCRGPHVPNTRFLKVFKLMKMSGAYWRGDAKNEQLQRIYGTAWADKKDLQAYIQRIEEAEKRDHRKIGKALNLFHMQEQSPGMVFWHPNGWTIYQVLEQYMRKVQKDNGYQEIKTPQIVDRSLWEKSGHWGNYATNMFTTSSESRDYAVKPMNCPCHVQVFNQGLKSYRELPIRLAEFGSCHRNEPSGSLHGLMRVRGFTQDDAHIFCTQAQIQEEVANFIKLTLDVYKDFGFDQIEMKLSTRPEKRVGTDESWDIAEKALADALDSSGLEWEYLPGEGAFYGPKIEFSLKDSLGRVWQCGTIQVDPNMPERLEAEFVNENNERETPIMLHRAILGSFERFLGMLIEHYAGWMPVWLAPQQVVVMNITDKQADACQNVASELQNAGLRAITDLRNEKIGFKIRERTLERIPYMLVLGDKEVESGQVNVRTREGENLGVMSVADFIELVQKAVAQKGRLTTKTDEE.

One can recognise a TGS domain in the interval 1–61 (MVAITLPDGN…TQDASVEIVT (61 aa)). The segment at 242 to 533 (DHRKIGKALN…LIEHYAGWMP (292 aa)) is catalytic. Residues Cys-333, His-384, and His-510 each coordinate Zn(2+).

It belongs to the class-II aminoacyl-tRNA synthetase family. In terms of assembly, homodimer. It depends on Zn(2+) as a cofactor.

It localises to the cytoplasm. The catalysed reaction is tRNA(Thr) + L-threonine + ATP = L-threonyl-tRNA(Thr) + AMP + diphosphate + H(+). Catalyzes the attachment of threonine to tRNA(Thr) in a two-step reaction: L-threonine is first activated by ATP to form Thr-AMP and then transferred to the acceptor end of tRNA(Thr). Also edits incorrectly charged L-seryl-tRNA(Thr). The polypeptide is Threonine--tRNA ligase (Psychrobacter sp. (strain PRwf-1)).